The chain runs to 152 residues: 6,7-dimethyl-8-ribityllumazine synthase (152 aa).

5-amino-6-(D-ribitylamino)uracil contacts are provided by residues Phe22, 56 to 58 (AFE), and 79 to 81 (AVI). 84–85 (AT) serves as a coordination point for (2S)-2-hydroxy-3-oxobutyl phosphate. Residue His87 is the Proton donor of the active site. Residue Phe112 coordinates 5-amino-6-(D-ribitylamino)uracil. Arg126 contributes to the (2S)-2-hydroxy-3-oxobutyl phosphate binding site.

This sequence belongs to the DMRL synthase family.

It carries out the reaction (2S)-2-hydroxy-3-oxobutyl phosphate + 5-amino-6-(D-ribitylamino)uracil = 6,7-dimethyl-8-(1-D-ribityl)lumazine + phosphate + 2 H2O + H(+). It participates in cofactor biosynthesis; riboflavin biosynthesis; riboflavin from 2-hydroxy-3-oxobutyl phosphate and 5-amino-6-(D-ribitylamino)uracil: step 1/2. Its function is as follows. Catalyzes the formation of 6,7-dimethyl-8-ribityllumazine by condensation of 5-amino-6-(D-ribitylamino)uracil with 3,4-dihydroxy-2-butanone 4-phosphate. This is the penultimate step in the biosynthesis of riboflavin. The polypeptide is 6,7-dimethyl-8-ribityllumazine synthase (Carboxydothermus hydrogenoformans (strain ATCC BAA-161 / DSM 6008 / Z-2901)).